Here is a 213-residue protein sequence, read N- to C-terminus: Transcription antitermination protein NusB (213 aa).

This sequence belongs to the NusB family.

In terms of biological role, involved in transcription antitermination. Required for transcription of ribosomal RNA (rRNA) genes. Binds specifically to the boxA antiterminator sequence of the ribosomal RNA (rrn) operons. This is Transcription antitermination protein NusB from Synechococcus elongatus (strain ATCC 33912 / PCC 7942 / FACHB-805) (Anacystis nidulans R2).